The chain runs to 1202 residues: Nucleolar protein 6 (1202 aa).

The segment at 1 to 64 (MNKTKRKQQS…KKYKDNETNK (64 aa)) is disordered.

It belongs to the NRAP family. As to quaternary structure, part of the small subunit (SSU) processome, composed of more than 70 proteins and the RNA chaperone small nucleolar RNA (snoRNA) U3.

Its subcellular location is the nucleus. It is found in the nucleolus. It localises to the chromosome. Its function is as follows. Part of the small subunit (SSU) processome, first precursor of the small eukaryotic ribosomal subunit. During the assembly of the SSU processome in the nucleolus, many ribosome biogenesis factors, an RNA chaperone and ribosomal proteins associate with the nascent pre-rRNA and work in concert to generate RNA folding, modifications, rearrangements and cleavage as well as targeted degradation of pre-ribosomal RNA by the RNA exosome. The polypeptide is Nucleolar protein 6 (Drosophila willistoni (Fruit fly)).